The chain runs to 402 residues: S-adenosylmethionine synthase (402 aa).

His16 contributes to the ATP binding site. Residue Asp18 coordinates Mg(2+). Glu44 is a K(+) binding site. Positions 57 and 103 each coordinate L-methionine. The interval 103-113 is flexible loop; it reads QSPDIAQGVDT. Residues 178 to 180, 249 to 250, Asp258, 264 to 265, Ala281, and Lys285 each bind ATP; these read DGK, KF, and RK. Asp258 provides a ligand contact to L-methionine. An L-methionine-binding site is contributed by Lys289.

The protein belongs to the AdoMet synthase family. As to quaternary structure, homotetramer; dimer of dimers. It depends on Mg(2+) as a cofactor. K(+) is required as a cofactor.

The protein resides in the cytoplasm. The catalysed reaction is L-methionine + ATP + H2O = S-adenosyl-L-methionine + phosphate + diphosphate. It functions in the pathway amino-acid biosynthesis; S-adenosyl-L-methionine biosynthesis; S-adenosyl-L-methionine from L-methionine: step 1/1. Catalyzes the formation of S-adenosylmethionine (AdoMet) from methionine and ATP. The overall synthetic reaction is composed of two sequential steps, AdoMet formation and the subsequent tripolyphosphate hydrolysis which occurs prior to release of AdoMet from the enzyme. The protein is S-adenosylmethionine synthase of Mycolicibacterium gilvum (strain PYR-GCK) (Mycobacterium gilvum (strain PYR-GCK)).